The sequence spans 106 residues: Evasin P1168 (106 aa).

Positions 1 to 24 (MEVKISTFLQIAVLIVLGIHLIAA) are cleaved as a signal peptide. Disulfide bonds link Cys-45–Cys-67, Cys-49–Cys-69, and Cys-60–Cys-80. Asn-48, Asn-54, and Asn-64 each carry an N-linked (GlcNAc...) asparagine glycan.

Its subcellular location is the secreted. In terms of biological role, salivary chemokine-binding protein which binds to host chemokines CXCL1, CXCL2 and CXCL8. The sequence is that of Evasin P1168 from Ixodes ricinus (Common tick).